The primary structure comprises 188 residues: dCTP deaminase (188 aa).

Residues 111–116, 135–137, Gln-156, Tyr-170, Lys-179, and Gln-180 contribute to the dCTP site; these read KSTYAR and TLE. Catalysis depends on Glu-137, which acts as the Proton donor/acceptor.

Belongs to the dCTP deaminase family. As to quaternary structure, homotrimer.

The enzyme catalyses dCTP + H2O + H(+) = dUTP + NH4(+). It participates in pyrimidine metabolism; dUMP biosynthesis; dUMP from dCTP (dUTP route): step 1/2. In terms of biological role, catalyzes the deamination of dCTP to dUTP. This chain is dCTP deaminase, found in Rickettsia africae (strain ESF-5).